A 107-amino-acid chain; its full sequence is Serine-rich and transmembrane domain-containing protein 1 (107 aa).

The chain crosses the membrane as a helical span at residues 43–63 (IYVSIFLSLLAFLLLLLIIAL).

The protein resides in the membrane. In Mus musculus (Mouse), this protein is Serine-rich and transmembrane domain-containing protein 1 (Sertm1).